The sequence spans 693 residues: tRNA (guanine(37)-N(1))-methyltransferase (693 aa).

Residues Arg327, 365–366, and 392–393 each bind S-adenosyl-L-methionine; these read DI and DA. The segment at 497–572 is disordered; sequence AGDSHQSNSH…QKAEDAPTNE (76 aa). The segment covering 500 to 512 has biased composition (low complexity); it reads SHQSNSHQSNPHE. Residue Asn591 participates in S-adenosyl-L-methionine binding.

The protein belongs to the class I-like SAM-binding methyltransferase superfamily. TRM5/TYW2 family. As to quaternary structure, monomer.

The protein localises to the mitochondrion matrix. Its subcellular location is the nucleus. It localises to the cytoplasm. It carries out the reaction guanosine(37) in tRNA + S-adenosyl-L-methionine = N(1)-methylguanosine(37) in tRNA + S-adenosyl-L-homocysteine + H(+). Specifically methylates the N1 position of guanosine-37 in various cytoplasmic and mitochondrial tRNAs. Methylation is not dependent on the nature of the nucleoside 5' of the target nucleoside. This is the first step in the biosynthesis of wybutosine (yW), a modified base adjacent to the anticodon of tRNAs and required for accurate decoding. In Plasmodium vivax (strain Salvador I), this protein is tRNA (guanine(37)-N(1))-methyltransferase.